The sequence spans 969 residues: MDGKPQVEVIVNGQVVPNLDDREYRLIKLENDLEVLLVRDPETDNASAAIDVHIGSQSNPRELLGLAHFCEHLLFMGTKKYPDENEYRKYLESHNGISNAYTASNNTNYYFEVSHDALYGALDRFAQFFIDPLFLEECKDREIRAVDSEHCKNLQSDSWRFWRLYSVLSNPKSVFSKFNTGNIETLGDVPKELGLDVRQELLKFYDKYYSANIMKLVIIGREPLDVLQDWAAELFSPIKNKAVPIPKFPDPPYTDNEVRKICYVKPVKNLRRLDIVFPIPGQYHKYKCRPAEYVCHLLGHEGEGSYLAYLKSLGLATSLIAFNVSITEDADIIVVSTFLTEEGLTDYQRVIKILFEYIRLLDQTNAHKFLFEETRIMSEAQFKTRQKTPAYQYAHVVASKLQREYPRDKVLYYSSVLTEFDPKGIQEVVESLRPNNFFAILAAHSIEKGLDNKEKFYGIDYGLEDLDSQFIDSLLHIKTSSELYLPLANEFIPWSLEVEKQPVTTKLKVPNLVRNDKFVRLWHKKDDTFWVPKANVFINFISPIARRSPKVSVSTTLYTRLIEDALGEYSYPASLAGLSFSLSPSTRGIILCISGFTDKLHVLLEKVVAMMRDLKVHPQRFEILKNRLEQELKDYDALEAYHRSNHVLTWLSEPHSWSNAELREAIKDVQVGDMSDFISDLLKQNFLESLVHGNYTEEDAKNLIESAQKLIDPKPVFASQLSRKRAIIVPEGGNYIYKTVVPNKEEKNSAIMYNLQISQLDDERSGALTRLARQIMKEPTFSILRTKEQLGYIVFTLVRQVTPFINLNIFVQSERSSTYLESRIRALLDQFKSEFLEMSDEDFSKHKSSLINFMLEKHTNLKEESSMYWLRICDGFYDFTRLEKQAEIVSTITKDEFYSFFINNIHYEGENTKKISVHVVSQRCEDEVYEIPNVTIIENGNMFKESMTLSKAAFPLKPFDEIDRSLLFN.

His-68 is a Zn(2+) binding site. The active-site Proton acceptor is the Glu-71. Positions 72 and 149 each coordinate Zn(2+).

Belongs to the peptidase M16 family.

It is found in the cytoplasm. Has a role in meiosis. This is Putative zinc protease mug138 (mug138) from Schizosaccharomyces pombe (strain 972 / ATCC 24843) (Fission yeast).